The following is a 172-amino-acid chain: Stellate orphon protein at 12D (172 aa).

The protein belongs to the casein kinase 2 subunit beta family. Interacts in vitro with the casein kinase 2 alpha subunit (CkII-alpha). The relevance of such interaction is however unclear in vivo. As to expression, probably not expressed in wild-type flies. In males lacking the Y chromosome, it is testis-specific and constitutes the main component of star-shaped crystals.

Functionally, unknown. In males lacking the Y chromosome, its strong overexpression leads to the appearance of proteinaceous star-shaped crystals in the primary spermatocytes causing meiotic drive, possibly by interfering with normal casein kinase 2 activity. The chain is Stellate orphon protein at 12D (Ste12DOR) from Drosophila melanogaster (Fruit fly).